The sequence spans 244 residues: Exosome complex component Rrp41 (244 aa).

The protein belongs to the RNase PH family. Rrp41 subfamily. As to quaternary structure, component of the archaeal exosome complex. Forms a hexameric ring-like arrangement composed of 3 Rrp41-Rrp42 heterodimers. The hexameric ring associates with a trimer of Rrp4 and/or Csl4 subunits.

Its subcellular location is the cytoplasm. Its function is as follows. Catalytic component of the exosome, which is a complex involved in RNA degradation. Has 3'-&gt;5' exoribonuclease activity. Can also synthesize heteromeric RNA-tails. This chain is Exosome complex component Rrp41, found in Nitrosopumilus maritimus (strain SCM1).